The primary structure comprises 888 residues: Tyrosine-protein kinase receptor UFO (888 aa).

Positions methionine 1 to alanine 18 are cleaved as a signal peptide. Residues alanine 19–tryptophan 86 form an interaction with GAS6 region. The Extracellular portion of the chain corresponds to alanine 19 to tryptophan 445. Ig-like C2-type domains lie at proline 30–serine 122 and proline 133–threonine 216. An N-linked (GlcNAc...) asparagine glycan is attached at asparagine 37. Cysteine 50 and cysteine 111 are joined by a disulfide. Asparagine 151 and asparagine 192 each carry an N-linked (GlcNAc...) asparagine glycan. Residues cysteine 154 and cysteine 199 are joined by a disulfide bond. Fibronectin type-III domains are found at residues arginine 221–glycine 325 and proline 330–proline 422. 3 N-linked (GlcNAc...) asparagine glycosylation sites follow: asparagine 333, asparagine 339, and asparagine 395. Residues tyrosine 446–valine 466 traverse the membrane as a helical segment. The Cytoplasmic portion of the chain corresponds to histidine 467 to alanine 888. The Protein kinase domain maps to valine 530–leucine 801. Residues leucine 536–valine 544 and lysine 561 contribute to the ATP site. Aspartate 666 acts as the Proton acceptor in catalysis. Tyrosine 697, tyrosine 773, and tyrosine 815 each carry phosphotyrosine; by autocatalysis. Positions glutamate 820 to cysteine 846 are disordered. Residue tyrosine 860 is modified to Phosphotyrosine; by autocatalysis. Residues serine 865–alanine 888 are disordered.

The protein belongs to the protein kinase superfamily. Tyr protein kinase family. AXL/UFO subfamily. As to quaternary structure, heterodimer and heterotetramer with ligand GAS6. Interacts with CBL, GRB2, LCK, NCK2, PIK3R1, PIK3R2, PIK3R3, PLCG1, SOCS1 and TNS2. Part of a complex including AXL, TNK2 and GRB2, in which GRB2 promotes AXL recruitment by TNK2. Post-translationally, monoubiquitinated upon GAS6-binding. A very small proportion of the receptor could be subjected to polyubiquitination in a very transient fashion. In terms of processing, phosphorylated at tyrosine residues by autocatalysis, which activates kinase activity. As to expression, in distinct substructures of a broad spectrum of developing tissues (in the late embryogenesis). In cells forming organ capsules as well as in connective tissue structures (in adult).

It localises to the cell membrane. It catalyses the reaction L-tyrosyl-[protein] + ATP = O-phospho-L-tyrosyl-[protein] + ADP + H(+). Activated by GAS6-binding and subsequent autophosphorylation. In terms of biological role, receptor tyrosine kinase that transduces signals from the extracellular matrix into the cytoplasm by binding growth factor GAS6 and which is thus regulating many physiological processes including cell survival, cell proliferation, migration and differentiation. Ligand binding at the cell surface induces dimerization and autophosphorylation of AXL. Following activation by ligand, AXL binds and induces tyrosine phosphorylation of PI3-kinase subunits PIK3R1, PIK3R2 and PIK3R3; but also GRB2, PLCG1, LCK and PTPN11. Other downstream substrate candidates for AXL are CBL, NCK2, SOCS1 and TNS2. Recruitment of GRB2 and phosphatidylinositol 3 kinase regulatory subunits by AXL leads to the downstream activation of the AKT kinase. GAS6/AXL signaling plays a role in various processes such as endothelial cell survival during acidification by preventing apoptosis, optimal cytokine signaling during human natural killer cell development, hepatic regeneration, gonadotropin-releasing hormone neuron survival and migration, platelet activation, or regulation of thrombotic responses. Also plays an important role in inhibition of Toll-like receptors (TLRs)-mediated innate immune response. This chain is Tyrosine-protein kinase receptor UFO (Axl), found in Mus musculus (Mouse).